The primary structure comprises 350 residues: Geranylgeranyl diphosphate synthase (350 aa).

3 residues coordinate isopentenyl diphosphate: K70, R73, and H102. The Mg(2+) site is built by D109 and D113. Positions 109–113 (DDVMD) match the DDXXD motif motif. R119 serves as a coordination point for isopentenyl diphosphate. Positions 240 to 244 (DDLIG) match the DDXXD motif motif.

It belongs to the FPP/GGPP synthase family. It depends on Mg(2+) as a cofactor.

The enzyme catalyses isopentenyl diphosphate + (2E,6E)-farnesyl diphosphate = (2E,6E,10E)-geranylgeranyl diphosphate + diphosphate. The protein operates within isoprenoid biosynthesis; geranylgeranyl diphosphate biosynthesis; geranylgeranyl diphosphate from farnesyl diphosphate and isopentenyl diphosphate: step 1/1. In terms of biological role, catalyzes the condensation of isopentenyl pyrophosphate (IPP) with (2E,6E)-farnesyl diphosphate (E,E-FPP) to yield geranylgeranyl diphosphate (GGPP). In Mycobacterium tuberculosis (strain ATCC 25618 / H37Rv), this protein is Geranylgeranyl diphosphate synthase.